The sequence spans 588 residues: Sulfite reductase [NADPH] hemoprotein beta-component (588 aa).

Residues C442, C448, C487, and C491 each coordinate [4Fe-4S] cluster. C491 serves as a coordination point for siroheme.

It belongs to the nitrite and sulfite reductase 4Fe-4S domain family. Alpha(8)-beta(8). The alpha component is a flavoprotein, the beta component is a hemoprotein. The cofactor is siroheme. [4Fe-4S] cluster serves as cofactor.

The catalysed reaction is hydrogen sulfide + 3 NADP(+) + 3 H2O = sulfite + 3 NADPH + 4 H(+). The protein operates within sulfur metabolism; hydrogen sulfide biosynthesis; hydrogen sulfide from sulfite (NADPH route): step 1/1. Its function is as follows. Component of the sulfite reductase complex that catalyzes the 6-electron reduction of sulfite to sulfide. This is one of several activities required for the biosynthesis of L-cysteine from sulfate. The sequence is that of Sulfite reductase [NADPH] hemoprotein beta-component from Actinobacillus pleuropneumoniae serotype 5b (strain L20).